The chain runs to 482 residues: Protein DETOXIFICATION 13 (482 aa).

12 helical membrane passes run 39–59 (LICF…LQII), 77–97 (LASS…SCAL), 124–144 (LALV…LLVF), 159–179 (AACL…TRYF), 188–208 (LLIT…LLVY), 218–238 (ALAL…LMCF), 268–288 (AAMI…SGLL), 297–317 (VLSV…AIAA), 337–357 (IVVY…STSL), 381–401 (MAPL…LSGI), 416–436 (LGAF…WIHL), and 439–459 (VGLW…LTLV).

Belongs to the multi antimicrobial extrusion (MATE) (TC 2.A.66.1) family.

The protein resides in the membrane. The protein is Protein DETOXIFICATION 13 of Arabidopsis thaliana (Mouse-ear cress).